The sequence spans 346 residues: Holliday junction branch migration complex subunit RuvB (346 aa).

A large ATPase domain (RuvB-L) region spans residues 4–184 (TDRLIAPTAK…FGIVQRLEFY (181 aa)). Residues Arg-24, Gly-65, Lys-68, Thr-69, Thr-70, 131-133 (EDF), Arg-174, Tyr-184, and Arg-221 contribute to the ATP site. Thr-69 contributes to the Mg(2+) binding site. The segment at 185–255 (NVKDLTHIVA…LADKALNMLN (71 aa)) is small ATPAse domain (RuvB-S). The tract at residues 258–346 (ERGFDHMDRR…QESQGGEGIA (89 aa)) is head domain (RuvB-H). The DNA site is built by Arg-294, Arg-313, and Arg-318.

Belongs to the RuvB family. As to quaternary structure, homohexamer. Forms an RuvA(8)-RuvB(12)-Holliday junction (HJ) complex. HJ DNA is sandwiched between 2 RuvA tetramers; dsDNA enters through RuvA and exits via RuvB. An RuvB hexamer assembles on each DNA strand where it exits the tetramer. Each RuvB hexamer is contacted by two RuvA subunits (via domain III) on 2 adjacent RuvB subunits; this complex drives branch migration. In the full resolvosome a probable DNA-RuvA(4)-RuvB(12)-RuvC(2) complex forms which resolves the HJ.

It localises to the cytoplasm. It catalyses the reaction ATP + H2O = ADP + phosphate + H(+). Its function is as follows. The RuvA-RuvB-RuvC complex processes Holliday junction (HJ) DNA during genetic recombination and DNA repair, while the RuvA-RuvB complex plays an important role in the rescue of blocked DNA replication forks via replication fork reversal (RFR). RuvA specifically binds to HJ cruciform DNA, conferring on it an open structure. The RuvB hexamer acts as an ATP-dependent pump, pulling dsDNA into and through the RuvAB complex. RuvB forms 2 homohexamers on either side of HJ DNA bound by 1 or 2 RuvA tetramers; 4 subunits per hexamer contact DNA at a time. Coordinated motions by a converter formed by DNA-disengaged RuvB subunits stimulates ATP hydrolysis and nucleotide exchange. Immobilization of the converter enables RuvB to convert the ATP-contained energy into a lever motion, pulling 2 nucleotides of DNA out of the RuvA tetramer per ATP hydrolyzed, thus driving DNA branch migration. The RuvB motors rotate together with the DNA substrate, which together with the progressing nucleotide cycle form the mechanistic basis for DNA recombination by continuous HJ branch migration. Branch migration allows RuvC to scan DNA until it finds its consensus sequence, where it cleaves and resolves cruciform DNA. The protein is Holliday junction branch migration complex subunit RuvB of Cellvibrio japonicus (strain Ueda107) (Pseudomonas fluorescens subsp. cellulosa).